A 31-amino-acid polypeptide reads, in one-letter code: Cyclotide mech-4 (31 aa).

Residues 1–31 (GSIPCGESCVYIPCISSLLGCSCKSKVCYKD) constitute a cross-link (cyclopeptide (Gly-Asp)). 3 cysteine pairs are disulfide-bonded: Cys5-Cys21, Cys9-Cys23, and Cys14-Cys28.

Post-translationally, this is a cyclic peptide. In terms of processing, contains 3 disulfide bonds.

Its function is as follows. Probably participates in a plant defense mechanism (Potential). Binds to and induces leakage in phospholipd membranes, particularly ones containing 1-palmitoyl-2-oleophosphatidylethanolamine (POPE). This chain is Cyclotide mech-4, found in Melicytus chathamicus (Chatham Island mahoe).